The following is a 181-amino-acid chain: Peptidyl-tRNA hydrolase (181 aa).

Tyr-14 contributes to the tRNA binding site. His-19 acts as the Proton acceptor in catalysis. TRNA-binding residues include Phe-61, Asn-63, and Asn-107.

Belongs to the PTH family. In terms of assembly, monomer.

It is found in the cytoplasm. It catalyses the reaction an N-acyl-L-alpha-aminoacyl-tRNA + H2O = an N-acyl-L-amino acid + a tRNA + H(+). Hydrolyzes ribosome-free peptidyl-tRNAs (with 1 or more amino acids incorporated), which drop off the ribosome during protein synthesis, or as a result of ribosome stalling. In terms of biological role, catalyzes the release of premature peptidyl moieties from peptidyl-tRNA molecules trapped in stalled 50S ribosomal subunits, and thus maintains levels of free tRNAs and 50S ribosomes. The sequence is that of Peptidyl-tRNA hydrolase from Campylobacter fetus subsp. fetus (strain 82-40).